The chain runs to 578 residues: Isocitrate dehydrogenase kinase/phosphatase (578 aa).

Residues 315-321 (APGIRGM) and K336 contribute to the ATP site. Residue D371 is part of the active site.

Belongs to the AceK family.

Its subcellular location is the cytoplasm. It carries out the reaction L-seryl-[isocitrate dehydrogenase] + ATP = O-phospho-L-seryl-[isocitrate dehydrogenase] + ADP + H(+). Its function is as follows. Bifunctional enzyme which can phosphorylate or dephosphorylate isocitrate dehydrogenase (IDH) on a specific serine residue. This is a regulatory mechanism which enables bacteria to bypass the Krebs cycle via the glyoxylate shunt in response to the source of carbon. When bacteria are grown on glucose, IDH is fully active and unphosphorylated, but when grown on acetate or ethanol, the activity of IDH declines drastically concomitant with its phosphorylation. This is Isocitrate dehydrogenase kinase/phosphatase from Escherichia coli O139:H28 (strain E24377A / ETEC).